The primary structure comprises 155 residues: 6,7-dimethyl-8-ribityllumazine synthase (155 aa).

5-amino-6-(D-ribitylamino)uracil-binding positions include phenylalanine 23, 57–59, and 81–83; these read AFE and AVI. 86-87 lines the (2S)-2-hydroxy-3-oxobutyl phosphate pocket; the sequence is ST. Histidine 89 serves as the catalytic Proton donor. Residue phenylalanine 114 coordinates 5-amino-6-(D-ribitylamino)uracil. Arginine 128 is a (2S)-2-hydroxy-3-oxobutyl phosphate binding site.

The protein belongs to the DMRL synthase family.

It carries out the reaction (2S)-2-hydroxy-3-oxobutyl phosphate + 5-amino-6-(D-ribitylamino)uracil = 6,7-dimethyl-8-(1-D-ribityl)lumazine + phosphate + 2 H2O + H(+). It participates in cofactor biosynthesis; riboflavin biosynthesis; riboflavin from 2-hydroxy-3-oxobutyl phosphate and 5-amino-6-(D-ribitylamino)uracil: step 1/2. In terms of biological role, catalyzes the formation of 6,7-dimethyl-8-ribityllumazine by condensation of 5-amino-6-(D-ribitylamino)uracil with 3,4-dihydroxy-2-butanone 4-phosphate. This is the penultimate step in the biosynthesis of riboflavin. The polypeptide is 6,7-dimethyl-8-ribityllumazine synthase (Pelobacter propionicus (strain DSM 2379 / NBRC 103807 / OttBd1)).